We begin with the raw amino-acid sequence, 412 residues long: Phosphoglycerate kinase, plasmid (412 aa).

Substrate-binding positions include 39–41, arginine 55, 78–81, arginine 133, and arginine 166; these read DLN and HLGR. ATP-binding positions include lysine 217, glutamate 339, and 365 to 368; that span reads GGDT.

The protein belongs to the phosphoglycerate kinase family. As to quaternary structure, monomer.

It is found in the cytoplasm. It catalyses the reaction (2R)-3-phosphoglycerate + ATP = (2R)-3-phospho-glyceroyl phosphate + ADP. It functions in the pathway carbohydrate biosynthesis; Calvin cycle. This is Phosphoglycerate kinase, plasmid (cbbKP) from Cupriavidus necator (strain ATCC 17699 / DSM 428 / KCTC 22496 / NCIMB 10442 / H16 / Stanier 337) (Ralstonia eutropha).